We begin with the raw amino-acid sequence, 65 residues long: Hainantoxin-X.2 (65 aa).

A signal peptide spans 1-20; that stretch reads MNVKILVLVAVLCLVVSTHA. Positions 21 to 37 are excised as a propeptide; that stretch reads ERHSKTDMEDSPMIQER. 3 cysteine pairs are disulfide-bonded: Cys39-Cys56, Cys46-Cys59, and Cys55-Cys64.

Belongs to the neurotoxin 36 family. 02 subfamily. Expressed by the venom gland.

It localises to the secreted. Reversibly blocks N-type calcium channels (Cav2.2/CACNA1B) in rat dorsal root ganglion cells. Elicits no toxic symptoms in either vertebrates or invertebrates during a period of 48 hours post-injection, when it was assayed in vivo by direct injection into mice and cockroaches. In Cyriopagopus hainanus (Chinese bird spider), this protein is Hainantoxin-X.2.